Consider the following 487-residue polypeptide: Bifunctional protein GlmU (487 aa).

Residues 1 to 232 (MAVIVLAAGA…AAELAGVNDR (232 aa)) form a pyrophosphorylase region. Residues 6 to 9 (LAAG), Lys-20, Gln-77, and 82 to 83 (GT) contribute to the UDP-N-acetyl-alpha-D-glucosamine site. Position 107 (Asp-107) interacts with Mg(2+). 4 residues coordinate UDP-N-acetyl-alpha-D-glucosamine: Gly-142, Glu-157, Asn-172, and Asn-230. Asn-230 is a Mg(2+) binding site. Residues 233-253 (VQLAAAGAELNRRTVTAAMRG) are linker. Residues 254-487 (GATIVDPATT…PTSTPQADQE (234 aa)) are N-acetyltransferase. 2 residues coordinate UDP-N-acetyl-alpha-D-glucosamine: Arg-335 and Lys-353. The Proton acceptor role is filled by His-365. Residues Tyr-368 and Asn-379 each coordinate UDP-N-acetyl-alpha-D-glucosamine. Residues Ala-382, 388-389 (NY), Ser-407, and Ala-425 contribute to the acetyl-CoA site. Residues 453-487 (AKKRPGTPAAEAGEAAAKRVAEGGSPTSTPQADQE) are disordered. The segment covering 477–487 (SPTSTPQADQE) has biased composition (polar residues).

In the N-terminal section; belongs to the N-acetylglucosamine-1-phosphate uridyltransferase family. The protein in the C-terminal section; belongs to the transferase hexapeptide repeat family. In terms of assembly, homotrimer. Mg(2+) is required as a cofactor.

It is found in the cytoplasm. The enzyme catalyses alpha-D-glucosamine 1-phosphate + acetyl-CoA = N-acetyl-alpha-D-glucosamine 1-phosphate + CoA + H(+). The catalysed reaction is N-acetyl-alpha-D-glucosamine 1-phosphate + UTP + H(+) = UDP-N-acetyl-alpha-D-glucosamine + diphosphate. It functions in the pathway nucleotide-sugar biosynthesis; UDP-N-acetyl-alpha-D-glucosamine biosynthesis; N-acetyl-alpha-D-glucosamine 1-phosphate from alpha-D-glucosamine 6-phosphate (route II): step 2/2. Its pathway is nucleotide-sugar biosynthesis; UDP-N-acetyl-alpha-D-glucosamine biosynthesis; UDP-N-acetyl-alpha-D-glucosamine from N-acetyl-alpha-D-glucosamine 1-phosphate: step 1/1. It participates in bacterial outer membrane biogenesis; LPS lipid A biosynthesis. Its function is as follows. Catalyzes the last two sequential reactions in the de novo biosynthetic pathway for UDP-N-acetylglucosamine (UDP-GlcNAc). The C-terminal domain catalyzes the transfer of acetyl group from acetyl coenzyme A to glucosamine-1-phosphate (GlcN-1-P) to produce N-acetylglucosamine-1-phosphate (GlcNAc-1-P), which is converted into UDP-GlcNAc by the transfer of uridine 5-monophosphate (from uridine 5-triphosphate), a reaction catalyzed by the N-terminal domain. The polypeptide is Bifunctional protein GlmU (Corynebacterium jeikeium (strain K411)).